Reading from the N-terminus, the 554-residue chain is Hydroxylamine reductase (554 aa).

[2Fe-2S] cluster-binding residues include cysteine 3, cysteine 6, cysteine 18, and cysteine 25. Residues histidine 252, glutamate 276, cysteine 320, cysteine 408, cysteine 436, cysteine 461, glutamate 495, and lysine 497 each coordinate hybrid [4Fe-2O-2S] cluster. Cysteine 408 is subject to Cysteine persulfide.

The protein belongs to the HCP family. It depends on [2Fe-2S] cluster as a cofactor. Hybrid [4Fe-2O-2S] cluster serves as cofactor.

The protein resides in the cytoplasm. The catalysed reaction is A + NH4(+) + H2O = hydroxylamine + AH2 + H(+). In terms of biological role, catalyzes the reduction of hydroxylamine to form NH(3) and H(2)O. The protein is Hydroxylamine reductase of Shewanella baltica (strain OS195).